Consider the following 247-residue polypeptide: Phosphoribosylaminoimidazole-succinocarboxamide synthase (247 aa).

This sequence belongs to the SAICAR synthetase family.

It carries out the reaction 5-amino-1-(5-phospho-D-ribosyl)imidazole-4-carboxylate + L-aspartate + ATP = (2S)-2-[5-amino-1-(5-phospho-beta-D-ribosyl)imidazole-4-carboxamido]succinate + ADP + phosphate + 2 H(+). Its pathway is purine metabolism; IMP biosynthesis via de novo pathway; 5-amino-1-(5-phospho-D-ribosyl)imidazole-4-carboxamide from 5-amino-1-(5-phospho-D-ribosyl)imidazole-4-carboxylate: step 1/2. This chain is Phosphoribosylaminoimidazole-succinocarboxamide synthase, found in Methanopyrus kandleri (strain AV19 / DSM 6324 / JCM 9639 / NBRC 100938).